The sequence spans 260 residues: Hydroxyacylglutathione hydrolase (260 aa).

Zn(2+) is bound by residues His61, His63, Asp65, His66, His119, Asp138, and His176.

It belongs to the metallo-beta-lactamase superfamily. Glyoxalase II family. In terms of assembly, monomer. Zn(2+) serves as cofactor.

The catalysed reaction is an S-(2-hydroxyacyl)glutathione + H2O = a 2-hydroxy carboxylate + glutathione + H(+). Its pathway is secondary metabolite metabolism; methylglyoxal degradation; (R)-lactate from methylglyoxal: step 2/2. Its function is as follows. Thiolesterase that catalyzes the hydrolysis of S-D-lactoyl-glutathione to form glutathione and D-lactic acid. The sequence is that of Hydroxyacylglutathione hydrolase from Brucella anthropi (strain ATCC 49188 / DSM 6882 / CCUG 24695 / JCM 21032 / LMG 3331 / NBRC 15819 / NCTC 12168 / Alc 37) (Ochrobactrum anthropi).